The chain runs to 286 residues: Phosphoribosylaminoimidazole-succinocarboxamide synthase (286 aa).

The protein belongs to the SAICAR synthetase family.

It carries out the reaction 5-amino-1-(5-phospho-D-ribosyl)imidazole-4-carboxylate + L-aspartate + ATP = (2S)-2-[5-amino-1-(5-phospho-beta-D-ribosyl)imidazole-4-carboxamido]succinate + ADP + phosphate + 2 H(+). It participates in purine metabolism; IMP biosynthesis via de novo pathway; 5-amino-1-(5-phospho-D-ribosyl)imidazole-4-carboxamide from 5-amino-1-(5-phospho-D-ribosyl)imidazole-4-carboxylate: step 1/2. The polypeptide is Phosphoribosylaminoimidazole-succinocarboxamide synthase (Mannheimia succiniciproducens (strain KCTC 0769BP / MBEL55E)).